The primary structure comprises 127 residues: Translation initiation factor 5A (127 aa).

Lysine 35 is modified (hypusine).

The protein belongs to the eIF-5A family.

Its subcellular location is the cytoplasm. Functions by promoting the formation of the first peptide bond. The chain is Translation initiation factor 5A (eIF5A) from Methanothrix thermoacetophila (strain DSM 6194 / JCM 14653 / NBRC 101360 / PT) (Methanosaeta thermophila).